The chain runs to 497 residues: Guanosine-5'-triphosphate,3'-diphosphate pyrophosphatase (497 aa).

The protein belongs to the GppA/Ppx family. GppA subfamily.

The catalysed reaction is guanosine 3'-diphosphate 5'-triphosphate + H2O = guanosine 3',5'-bis(diphosphate) + phosphate + H(+). Its pathway is purine metabolism; ppGpp biosynthesis; ppGpp from GTP: step 2/2. In terms of biological role, catalyzes the conversion of pppGpp to ppGpp. Guanosine pentaphosphate (pppGpp) is a cytoplasmic signaling molecule which together with ppGpp controls the 'stringent response', an adaptive process that allows bacteria to respond to amino acid starvation, resulting in the coordinated regulation of numerous cellular activities. This Vibrio vulnificus (strain YJ016) protein is Guanosine-5'-triphosphate,3'-diphosphate pyrophosphatase.